We begin with the raw amino-acid sequence, 906 residues long: Probable disease resistance RPP8-like protein 2 (906 aa).

A coiled-coil region spans residues 15–68 (ELLSRESARLNGIDEQVDGLKRQLGRLQSLLKDADAKKNETERVRNFLEDVKDI). One can recognise an NB-ARC domain in the interval 144-454 (LQERQREIRQ…AEGIITPFHD (311 aa)). 190–197 (GMGGIGKT) contacts ATP. LRR repeat units follow at residues 573 to 597 (LPLL…SIGD), 598 to 621 (LIHL…LGNL), 623 to 644 (LLLC…NVLK), 646 to 671 (MQEL…DLVN), 672 to 696 (LESL…KLSV), 704 to 727 (ECTF…SFHD), 740 to 766 (LLVL…QYRF), 767 to 790 (PPHL…ILEK), 791 to 818 (LLHL…GFPQ), and 840 to 865 (MPCL…KYVT).

Belongs to the disease resistance NB-LRR family. RPP8/HRT subfamily.

Potential disease resistance protein. In Arabidopsis thaliana (Mouse-ear cress), this protein is Probable disease resistance RPP8-like protein 2 (RPP8L2).